The primary structure comprises 324 residues: DNA-directed RNA polymerase subunit alpha (324 aa).

An alpha N-terminal domain (alpha-NTD) region spans residues 1 to 230; that stretch reads MQSSGLLKPR…EQLSVFADLE (230 aa). The alpha C-terminal domain (alpha-CTD) stretch occupies residues 244–324; it reads VDPVLLRPVD…NWPPAGLEKA (81 aa).

It belongs to the RNA polymerase alpha chain family. As to quaternary structure, homodimer. The RNAP catalytic core consists of 2 alpha, 1 beta, 1 beta' and 1 omega subunit. When a sigma factor is associated with the core the holoenzyme is formed, which can initiate transcription.

The enzyme catalyses RNA(n) + a ribonucleoside 5'-triphosphate = RNA(n+1) + diphosphate. Its function is as follows. DNA-dependent RNA polymerase catalyzes the transcription of DNA into RNA using the four ribonucleoside triphosphates as substrates. This is DNA-directed RNA polymerase subunit alpha from Dechloromonas aromatica (strain RCB).